The following is a 200-amino-acid chain: MLRALNRLAARPGGQPPTLLLLPVRGRKTRHDPPAKSKVGRVKMPPAVDPAELFVLTERYRQYRETVRALRREFTLEVRGKLHEARAGVLAERKAQEAIREHQELMAWNREENRRLQELRIARLQLEAQAQELRQAEVQAQRAQEEQAWVQLKEQEVLKLQEEAKNFITRENLEARIEEALDSPKSYNWAVTKEGQVVRN.

A mitochondrion-targeting transit peptide spans 1-27 (MLRALNRLAARPGGQPPTLLLLPVRGR). K159 bears the N6-acetyllysine mark.

The protein belongs to the mitochondrion-specific ribosomal protein mS26 family. In terms of assembly, component of the mitochondrial ribosome small subunit (28S) which comprises a 12S rRNA and about 30 distinct proteins.

It is found in the mitochondrion. In Rattus norvegicus (Rat), this protein is Small ribosomal subunit protein mS26 (Mrps26).